We begin with the raw amino-acid sequence, 511 residues long: ESX-1 secretion system protein EccD1 (511 aa).

At serine 2 the chain carries N-acetylserine. Residues 2–143 (SAPAVAAGPT…PEFDRTALNR (142 aa)) are Cytoplasmic-facing. Residues 144–164 (FVGAAIPLLTAPVIGMAMRAW) form a helical membrane-spanning segment. At 165–170 (WETGRS) the chain is on the periplasmic side. A helical transmembrane segment spans residues 171–191 (LWWPLAIGILGIAVLVGSFVA). The Cytoplasmic segment spans residues 192–202 (NRFYQSGHLAE). A helical membrane pass occupies residues 203–223 (CLLVTTYLLIATAAALAVPLP). Residues 224–227 (RGVN) are Periplasmic-facing. Residues 228-248 (SLGAPQVAGAATAVLFLTLMT) traverse the membrane as a helical segment. At 249–257 (RGGPRKRHE) the chain is on the cytoplasmic side. A helical transmembrane segment spans residues 258–278 (LASFAVITAIAVIAAAAAFGY). Residues 279 to 285 (GYQDWVP) are Periplasmic-facing. A helical membrane pass occupies residues 286-306 (AGGIAFGLFIVTNAAKLTVAV). Residues 307-367 (ARIALPPIPV…TERSKLAKQL (61 aa)) lie on the Cytoplasmic side of the membrane. Helical transmembrane passes span 368-388 (LIGY…AVVV) and 389-409 (RGHF…VCGF). Residues 410 to 420 (RSRLYAERWCA) lie on the Cytoplasmic side of the membrane. Residues 421–441 (WALLAATVAIPTGLTAKLIIW) traverse the membrane as a helical segment. The Periplasmic segment spans residues 442 to 444 (YPH). Residues 445–465 (YAWLLLSVYLTVALVALVVVG) traverse the membrane as a helical segment. Residues 466 to 482 (SMAHVRRVSPVVKRTLE) are Cytoplasmic-facing. Residues 483-503 (LIDGAMIAAIIPMLLWITGVY) form a helical membrane-spanning segment. Residues 504-511 (DTVRNIRF) lie on the Periplasmic side of the membrane.

The protein belongs to the EccD/Snm4 family. Possibly a homodimer. Part of the ESX-1 / type VII secretion system (T7SS), which is composed of cytosolic and membrane components. The ESX-1 membrane complex is composed of EccB1, EccCa1, EccCb1, EccD1 and EccE1.

It localises to the cell inner membrane. Its function is as follows. Part of the ESX-1 specialized secretion system, which delivers several virulence factors to host cells during infection, including the key virulence factors EsxA (ESAT-6) and EsxB (CFP-10). This Mycobacterium tuberculosis (strain ATCC 25618 / H37Rv) protein is ESX-1 secretion system protein EccD1.